The sequence spans 337 residues: Heme A synthase (337 aa).

5 consecutive transmembrane segments (helical) span residues 6–26 (ITKWLCINCIMVIATIVIGGI), 87–107 (FIHRLLGRITALIYIVPVIYF), 119–139 (LPYIIALLLFCVQGFIGWYMV), 154–174 (LAFHLIIAVIIYHILFYQLIK), and 192–212 (LIFSGIAITVVYVQIFLGALV). His-256 contributes to the heme binding site. 3 helical membrane-spanning segments follow: residues 258-278 (LVGYSVFLVVVVLIICLLKIE), 285-305 (IAYFLMIALFMQVSTGIITLL), and 308-328 (VPIIIASIHQLFAIILLSVII). Heme is bound at residue His-316.

This sequence belongs to the COX15/CtaA family. Type 2 subfamily. As to quaternary structure, interacts with CtaB. Heme b serves as cofactor.

The protein localises to the cell membrane. It carries out the reaction Fe(II)-heme o + 2 A + H2O = Fe(II)-heme a + 2 AH2. It functions in the pathway porphyrin-containing compound metabolism; heme A biosynthesis; heme A from heme O: step 1/1. In terms of biological role, catalyzes the conversion of heme O to heme A by two successive hydroxylations of the methyl group at C8. The first hydroxylation forms heme I, the second hydroxylation results in an unstable dihydroxymethyl group, which spontaneously dehydrates, resulting in the formyl group of heme A. This chain is Heme A synthase, found in Rickettsia rickettsii (strain Iowa).